The primary structure comprises 526 residues: Tyrosine-protein kinase transforming protein Src (526 aa).

The disordered stretch occupies residues 1–57 (MGSSKSKPKDPSQRRCSLEPPDSTHHGGFPASQTPNKTAAPDTHRTPSRSFGTVATE). G2 carries the N-myristoyl glycine; by host lipid modification. Positions 7-25 (KPKDPSQRRCSLEPPDSTH) are enriched in basic and acidic residues. The region spanning 81–142 (GGVTTFVALY…PSNYVAPSDS (62 aa)) is the SH3 domain. The SH2 domain occupies 148-245 (WYFGKITRRE…GLCHRLTNVC (98 aa)). The Protein kinase domain occupies 267–517 (LRLEVKLGQG…TFEYLQAQLL (251 aa)). Residues 273-281 (LGQGCFGEV) and K295 each bind ATP. Residue D386 is the Proton acceptor of the active site. The residue at position 416 (Y416) is a Phosphotyrosine; by autocatalysis.

This sequence belongs to the protein kinase superfamily. Tyr protein kinase family. SRC subfamily. The phosphorylated form is termed pp60v-src.

It catalyses the reaction L-tyrosyl-[protein] + ATP = O-phospho-L-tyrosyl-[protein] + ADP + H(+). In terms of biological role, this phosphoprotein, required for both the initiation and the maintenance of neoplastic transformation, is a protein kinase that catalyzes the phosphorylation of tyrosine residues in vitro. The chain is Tyrosine-protein kinase transforming protein Src (V-SRC) from Galliformes.